Reading from the N-terminus, the 600-residue chain is MNLKPPTSKVELRIKCHKILDKDTLSKSDPRASVYEKDRAGQFRLIGKTETIQNQLNPEFKTPIVIDYRFEEIQVLKFEIHDVDKNDEDFIGDASCTLTSILSKPGQTVCLQLLTKSGKHAGSMTVIAEEIKNTLQTIKFNLIGKKFDKKDLFGAGCDPYLIISRKVPSTNTFVKIYESQVQKGTLNPVFSGIEMKLEELCGGDMQREIKFEFYDWDRIGKHDYIGEFHTNAQELLQPNQAFNVINSHKQEKKSGYKNSGTVSVSDAVIEREYNFLEYIMGGCQMNLIVGIDCTASNGDSNDPNSLHYKNAQGLNQYANAICSVGNVIVPYTTTPLIPVYGFGGIMPGQSEVSHCFPMTLNASNTLCCGVNGVLDCYYDNISKIQLHGPTYFAPLINMAARYASQGQSQSNQKYTILMIITDGEILDADNTIDAIVKSSGLPLSIIIVGVGNANFTNMNILDGDDAALQSGGVRAERDIVQFVAMRDYLNRPNELAAEVLREIPTQFLSFMKKYKFRPNPPPPPPPVIIGAPPQYDNPTTTTTATSPSTGIDLNKGSNVGLNLTKTESSPSPSGGAGIDLNKGSVVDITKGVSNVSLEKN.

2 consecutive C2 domains span residues 1–111 and 116–246; these read MNLK…TVCL and KSGK…NVIN. Positions 23, 29, 82, 84, 89, 151, 158, 215, 217, and 223 each coordinate Ca(2+). Positions 286 to 503 constitute a VWFA domain; that stretch reads NLIVGIDCTA…ELAAEVLREI (218 aa). A compositionally biased stretch (low complexity) spans 535–549; the sequence is YDNPTTTTTATSPST. Residues 535–583 form a disordered region; that stretch reads YDNPTTTTTATSPSTGIDLNKGSNVGLNLTKTESSPSPSGGAGIDLNKG. Positions 555 to 572 are enriched in polar residues; that stretch reads KGSNVGLNLTKTESSPSP.

Belongs to the copine family. Ca(2+) is required as a cofactor.

It localises to the cytoplasm. It is found in the membrane. In terms of biological role, required for cytokinesis, contractile vacuole function and development. This is Copine-A (cpnA) from Dictyostelium discoideum (Social amoeba).